Consider the following 81-residue polypeptide: UPF0180 protein RBAM_013970 (81 aa).

This sequence belongs to the UPF0180 family.

The chain is UPF0180 protein RBAM_013970 from Bacillus velezensis (strain DSM 23117 / BGSC 10A6 / LMG 26770 / FZB42) (Bacillus amyloliquefaciens subsp. plantarum).